The primary structure comprises 338 residues: MATPKVGINGFGRIGRIVFRNAIASGDVDVVAVNDPFIETHYAAYMLKYDSTHGRFQGTIETYDEGLIVNGKKIRFFAERDPAAIPWGSAGAAYIVESTGVFTTTEKASAHLKGGAKKVIISAPSADAPMFVMGVNNKEYKTDINVLSNASCTTNCLAPLAKVINDNFGLVEGLMTTVHSYTATQKTVDAPSAKDWRGGRTAAQNIIPSSTGAAKAVGKVIPSLNGKLTGMSMRVPTANVSVVDLTCRTEKAVTYEDIKKTIKAASEEGELKGILGYTEDDIVSTDLIGDAHSSIFDAKAGIALNEHFIKLVSWYDNEWGYSRRVVDLIAYISKVDGQ.

NAD(+) is bound by residues 13 to 14 (RI), D35, and R80. D-glyceraldehyde 3-phosphate is bound by residues 151-153 (SCT), T182, 211-212 (TG), and R234. Residue C152 is the Nucleophile of the active site. Position 317 (N317) interacts with NAD(+).

The protein belongs to the glyceraldehyde-3-phosphate dehydrogenase family. As to quaternary structure, homotetramer.

Its subcellular location is the cytoplasm. The enzyme catalyses D-glyceraldehyde 3-phosphate + phosphate + NAD(+) = (2R)-3-phospho-glyceroyl phosphate + NADH + H(+). It functions in the pathway carbohydrate degradation; glycolysis; pyruvate from D-glyceraldehyde 3-phosphate: step 1/5. This Aspergillus oryzae (strain ATCC 42149 / RIB 40) (Yellow koji mold) protein is Glyceraldehyde-3-phosphate dehydrogenase (gpdA).